The chain runs to 104 residues: Gastrin (104 aa).

A signal peptide spans 1-21; sequence MQRLCVCVLILALALTAFSEA. A disordered region spans residues 22-49; that stretch reads SWKPRSQLQDAPSGPGANGGLEPHWLNR. The propeptide occupies 22-58; it reads SWKPRSQLQDAPSGPGANGGLEPHWLNRLGPASHHRW. Pyrrolidone carboxylic acid occurs at positions 59 and 76. Residue tyrosine 87 is modified to Sulfotyrosine. At phenylalanine 92 the chain carries Phenylalanine amide. Residue serine 96 is modified to Phosphoserine. Residues 96-104 constitute a propeptide that is removed on maturation; that stretch reads SAEDGDQHP.

This sequence belongs to the gastrin/cholecystokinin family.

It localises to the secreted. In terms of biological role, gastrin stimulates the stomach mucosa to produce and secrete hydrochloric acid and the pancreas to secrete its digestive enzymes. It also stimulates smooth muscle contraction and increases blood circulation and water secretion in the stomach and intestine. The sequence is that of Gastrin (GAST) from Felis catus (Cat).